Consider the following 155-residue polypeptide: RING finger protein 122 (155 aa).

Residues 40–60 (VIFGTGIFVFMLSLIFCCYFI) form a helical membrane-spanning segment. The RING-type; atypical zinc-finger motif lies at 93 to 134 (CAVCLEDFKGKDELGVLPCQHAFHRKCLVKWLEVRCVCPMCN).

It localises to the golgi apparatus. The protein resides in the endoplasmic reticulum. It is found in the membrane. May induce necrosis and apoptosis. May play a role in cell viability. In Mus musculus (Mouse), this protein is RING finger protein 122 (Rnf122).